The primary structure comprises 736 residues: Protein kinase C epsilon type (736 aa).

The region spanning 1-117 is the C2 domain; that stretch reads MVVFNGLLKI…NGSRHFEDWI (117 aa). The residue at position 62 (Ser62) is a Phosphoserine. The Phorbol-ester/DAG-type 1 zinc-finger motif lies at 169-220; that stretch reads GHKFMATYLRQPTYCSHCRDFIWGVIGKQGYQCQVCTCVVHKRCHELIITKV. Phosphothreonine is present on Thr228. Ser234 carries the phosphoserine modification. A Phorbol-ester/DAG-type 2 zinc finger spans residues 242-292; that stretch reads PHKFGIHNYKVPTFCDHCGSLLWGLLRQGLQCKVCKMNVHRRCETNVAPNC. Phosphothreonine is present on Thr309. The tract at residues 310–356 is disordered; the sequence is PDKITNSGQRRKKLIGGAESPQPTSGSSPSEEDRSKSAPTSPCDQEL. Ser316, Ser329, and Ser337 each carry phosphoserine. Phosphoserine; by GSK3-beta is present on Ser346. Phosphothreonine is present on Thr349. Ser350 carries the phosphoserine; by MAPK11 and MAPK14 modification. Ser368 carries the phosphoserine; by autocatalysis modification. Residues 369-397 are disordered; that stretch reads FDNRGEEHRAASSTDGQLGSPENGEVRQG. Ser388 is subject to Phosphoserine. The Protein kinase domain occupies 407-667; that stretch reads FNFIKVLGKG…EDAIKQHPFF (261 aa). Residues 413–421 and Lys436 contribute to the ATP site; that span reads LGKGSFGKV. Asp531 functions as the Proton acceptor in the catalytic mechanism. The residue at position 565 (Thr565) is a Phosphothreonine; by PDPK1. The 69-residue stretch at 668–736 folds into the AGC-kinase C-terminal domain; that stretch reads KEIDWVLLEQ…FSYFGEDLMP (69 aa). Thr702 is subject to Phosphothreonine. Phosphothreonine; by autocatalysis is present on Thr709. The residue at position 728 (Ser728) is a Phosphoserine; by autocatalysis.

It belongs to the protein kinase superfamily. AGC Ser/Thr protein kinase family. PKC subfamily. In terms of assembly, forms a ternary complex with TRIM63 and RACK1/GN2BL1. Can form a complex with PDLIM5 and N-type calcium channel. Interacts with COPB1. Interacts with DGKQ. Interacts with STAT3. Interacts with YWHAB. Interacts with HSP90AB1; promotes functional activation in a heat shock-dependent manner. Interacts (via phorbol-ester/DAG-type 2 domain) with PRPH and VIM. Interacts with NLRP5/MATER. In terms of processing, phosphorylation on Thr-565 by PDPK1 triggers autophosphorylation on Ser-728. Phosphorylation in the hinge domain at Ser-350 by MAPK11 or MAPK14, Ser-346 by GSK3B and Ser-368 by autophosphorylation is required for interaction with YWHAB. In response to growth factors, phosphorylated at Thr-702 and Ser-728 by the mTORC2 complex, promoting autophosphorylation and activation of PRKCE.

It localises to the cytoplasm. It is found in the cytoskeleton. Its subcellular location is the cell membrane. The protein resides in the perinuclear region. The protein localises to the nucleus. The catalysed reaction is L-seryl-[protein] + ATP = O-phospho-L-seryl-[protein] + ADP + H(+). It carries out the reaction L-threonyl-[protein] + ATP = O-phospho-L-threonyl-[protein] + ADP + H(+). Its activity is regulated as follows. Novel PKCs (PRKCD, PRKCE, PRKCH and PRKCQ) are calcium-insensitive, but activated by diacylglycerol (DAG) and phosphatidylserine. Three specific sites; Thr-565 (activation loop of the kinase domain), Thr-709 (turn motif) and Ser-728 (hydrophobic region), need to be phosphorylated for its full activation. Calcium-independent, phospholipid- and diacylglycerol (DAG)-dependent serine/threonine-protein kinase that plays essential roles in the regulation of multiple cellular processes linked to cytoskeletal proteins, such as cell adhesion, motility, migration and cell cycle, functions in neuron growth and ion channel regulation, and is involved in immune response, cancer cell invasion and regulation of apoptosis. Mediates cell adhesion to the extracellular matrix via integrin-dependent signaling, by mediating angiotensin-2-induced activation of integrin beta-1 (ITGB1) in cardiac fibroblasts. Phosphorylates MARCKS, which phosphorylates and activates PTK2/FAK, leading to the spread of cardiomyocytes. Involved in the control of the directional transport of ITGB1 in mesenchymal cells by phosphorylating vimentin (VIM), an intermediate filament (IF) protein. In epithelial cells, associates with and phosphorylates keratin-8 (KRT8), which induces targeting of desmoplakin at desmosomes and regulates cell-cell contact. Phosphorylates IQGAP1, which binds to CDC42, mediating epithelial cell-cell detachment prior to migration. During cytokinesis, forms a complex with YWHAB, which is crucial for daughter cell separation, and facilitates abscission by a mechanism which may implicate the regulation of RHOA. In cardiac myocytes, regulates myofilament function and excitation coupling at the Z-lines, where it is indirectly associated with F-actin via interaction with COPB1. During endothelin-induced cardiomyocyte hypertrophy, mediates activation of PTK2/FAK, which is critical for cardiomyocyte survival and regulation of sarcomere length. Plays a role in the pathogenesis of dilated cardiomyopathy via persistent phosphorylation of troponin I (TNNI3). Involved in nerve growth factor (NFG)-induced neurite outgrowth and neuron morphological change independently of its kinase activity, by inhibition of RHOA pathway, activation of CDC42 and cytoskeletal rearrangement. May be involved in presynaptic facilitation by mediating phorbol ester-induced synaptic potentiation. Phosphorylates gamma-aminobutyric acid receptor subunit gamma-2 (GABRG2), which reduces the response of GABA receptors to ethanol and benzodiazepines and may mediate acute tolerance to the intoxicating effects of ethanol. Upon PMA treatment, phosphorylates the capsaicin- and heat-activated cation channel TRPV1, which is required for bradykinin-induced sensitization of the heat response in nociceptive neurons. Is able to form a complex with PDLIM5 and N-type calcium channel, and may enhance channel activities and potentiates fast synaptic transmission by phosphorylating the pore-forming alpha subunit CACNA1B (CaV2.2). Downstream of TLR4, plays an important role in the lipopolysaccharide (LPS)-induced immune response by phosphorylating and activating TICAM2/TRAM, which in turn activates the transcription factor IRF3 and subsequent cytokines production. In differentiating erythroid progenitors, is regulated by EPO and controls the protection against the TNFSF10/TRAIL-mediated apoptosis, via BCL2. May be involved in the regulation of the insulin-induced phosphorylation and activation of AKT1. Phosphorylates NLRP5/MATER and may thereby modulate AKT pathway activation in cumulus cells. Phosphorylates and activates LRRK1, which phosphorylates RAB proteins involved in intracellular trafficking. The chain is Protein kinase C epsilon type (PRKCE) from Oryctolagus cuniculus (Rabbit).